The primary structure comprises 218 residues: Thiopurine S-methyltransferase (218 aa).

S-adenosyl-L-methionine contacts are provided by W10, L45, E66, and R123.

It belongs to the class I-like SAM-binding methyltransferase superfamily. TPMT family.

It localises to the cytoplasm. It carries out the reaction S-adenosyl-L-methionine + a thiopurine = S-adenosyl-L-homocysteine + a thiopurine S-methylether.. The polypeptide is Thiopurine S-methyltransferase (Shewanella amazonensis (strain ATCC BAA-1098 / SB2B)).